Here is a 286-residue protein sequence, read N- to C-terminus: Homeobox-leucine zipper protein ATHB-20 (286 aa).

Residues 84–143 (LGEKKKRLQLEQVKALEKSFELGNKLEPERKIQLAKALGMQPRQIAIWFQNRRARWKTRQ) constitute a DNA-binding region (homeobox). A leucine-zipper region spans residues 144–179 (LERDYDSLKKQFESLKSDNASLLAYNKKLLAEVMAL).

The protein belongs to the HD-ZIP homeobox family. Class I subfamily. Widely expressed.

Its subcellular location is the nucleus. Its function is as follows. Probable transcription factor. The sequence is that of Homeobox-leucine zipper protein ATHB-20 (ATHB-20) from Arabidopsis thaliana (Mouse-ear cress).